Here is a 353-residue protein sequence, read N- to C-terminus: Photosystem II protein D1 (353 aa).

Thr2 is subject to N-acetylthreonine. Thr2 bears the Phosphothreonine mark. 3 helical membrane passes run 29–46 (YIGWFGVLMIPLLLTATS), 118–133 (HFLLGVACYMGREWEL), and 142–156 (WIAVAYSAPVAAATA). His118 provides a ligand contact to chlorophyll a. Residue Tyr126 coordinates pheophytin a. 2 residues coordinate [CaMn4O5] cluster: Asp170 and Glu189. The chain crosses the membrane as a helical span at residues 197–218 (FHMLGVAGVFGGSLFSAMHGSL). A chlorophyll a-binding site is contributed by His198. A quinone-binding positions include His215 and 264–265 (SF). His215 provides a ligand contact to Fe cation. Fe cation is bound at residue His272. A helical membrane pass occupies residues 274 to 288 (FLAAWPVVCIWFTAL). [CaMn4O5] cluster-binding residues include His332, Glu333, Asp342, and Ala344. Residues 345–353 (SVDAPAVQG) constitute a propeptide that is removed on maturation.

The protein belongs to the reaction center PufL/M/PsbA/D family. As to quaternary structure, PSII is composed of 1 copy each of membrane proteins PsbA, PsbB, PsbC, PsbD, PsbE, PsbF, PsbH, PsbI, PsbJ, PsbK, PsbL, PsbM, PsbT, PsbX, PsbY, PsbZ, Psb30/Ycf12, at least 3 peripheral proteins of the oxygen-evolving complex and a large number of cofactors. It forms dimeric complexes. The cofactor is The D1/D2 heterodimer binds P680, chlorophylls that are the primary electron donor of PSII, and subsequent electron acceptors. It shares a non-heme iron and each subunit binds pheophytin, quinone, additional chlorophylls, carotenoids and lipids. D1 provides most of the ligands for the Mn4-Ca-O5 cluster of the oxygen-evolving complex (OEC). There is also a Cl(-1) ion associated with D1 and D2, which is required for oxygen evolution. The PSII complex binds additional chlorophylls, carotenoids and specific lipids.. Post-translationally, tyr-161 forms a radical intermediate that is referred to as redox-active TyrZ, YZ or Y-Z. In terms of processing, C-terminally processed by CTPA; processing is essential to allow assembly of the oxygen-evolving complex and thus photosynthetic growth.

The protein resides in the plastid. The protein localises to the chloroplast thylakoid membrane. It carries out the reaction 2 a plastoquinone + 4 hnu + 2 H2O = 2 a plastoquinol + O2. In terms of biological role, photosystem II (PSII) is a light-driven water:plastoquinone oxidoreductase that uses light energy to abstract electrons from H(2)O, generating O(2) and a proton gradient subsequently used for ATP formation. It consists of a core antenna complex that captures photons, and an electron transfer chain that converts photonic excitation into a charge separation. The D1/D2 (PsbA/PsbD) reaction center heterodimer binds P680, the primary electron donor of PSII as well as several subsequent electron acceptors. This Nephroselmis olivacea (Green alga) protein is Photosystem II protein D1.